Reading from the N-terminus, the 296-residue chain is Urease accessory protein UreD (296 aa).

The protein belongs to the UreD family. UreD, UreF and UreG form a complex that acts as a GTP-hydrolysis-dependent molecular chaperone, activating the urease apoprotein by helping to assemble the nickel containing metallocenter of UreC. The UreE protein probably delivers the nickel.

The protein resides in the cytoplasm. In terms of biological role, required for maturation of urease via the functional incorporation of the urease nickel metallocenter. In Nitrosococcus oceani (strain ATCC 19707 / BCRC 17464 / JCM 30415 / NCIMB 11848 / C-107), this protein is Urease accessory protein UreD.